Reading from the N-terminus, the 272-residue chain is Ribonuclease HII (272 aa).

Residues 87-272 form the RNase H type-2 domain; the sequence is KYVAGVDEVG…HRMSFLKNIL (186 aa). Residues aspartate 93, glutamate 94, and aspartate 188 each contribute to the a divalent metal cation site.

This sequence belongs to the RNase HII family. It depends on Mn(2+) as a cofactor. Requires Mg(2+) as cofactor.

Its subcellular location is the cytoplasm. The catalysed reaction is Endonucleolytic cleavage to 5'-phosphomonoester.. Functionally, endonuclease that specifically degrades the RNA of RNA-DNA hybrids. The chain is Ribonuclease HII from Clostridium perfringens (strain 13 / Type A).